The primary structure comprises 469 residues: UDP-N-acetylmuramate--L-alanine ligase (469 aa).

Residue 114–120 (GTHGKTT) participates in ATP binding.

Belongs to the MurCDEF family.

It localises to the cytoplasm. It catalyses the reaction UDP-N-acetyl-alpha-D-muramate + L-alanine + ATP = UDP-N-acetyl-alpha-D-muramoyl-L-alanine + ADP + phosphate + H(+). It participates in cell wall biogenesis; peptidoglycan biosynthesis. Functionally, cell wall formation. The sequence is that of UDP-N-acetylmuramate--L-alanine ligase from Chlorobium phaeovibrioides (strain DSM 265 / 1930) (Prosthecochloris vibrioformis (strain DSM 265)).